A 377-amino-acid polypeptide reads, in one-letter code: Formate dehydrogenase, mitochondrial (377 aa).

The transit peptide at 1 to 29 (MAAMWRAAARQLVDRAVGSRAAHTSAGSK) directs the protein to the mitochondrion. Residues I121 and N145 each coordinate substrate. NAD(+) contacts are provided by residues T146, D220, 255–259 (PLTEK), N281, D307, and 331–334 (HISG).

The protein belongs to the D-isomer specific 2-hydroxyacid dehydrogenase family. FDH subfamily. In terms of assembly, homodimer.

Its subcellular location is the mitochondrion. It catalyses the reaction formate + NAD(+) = CO2 + NADH. Catalyzes the NAD(+)-dependent oxidation of formate to carbon dioxide. Involved in the cell stress response. This is Formate dehydrogenase, mitochondrial from Hordeum vulgare (Barley).